Reading from the N-terminus, the 518-residue chain is Glutamate--cysteine ligase (518 aa).

The protein belongs to the glutamate--cysteine ligase type 1 family. Type 1 subfamily.

The enzyme catalyses L-cysteine + L-glutamate + ATP = gamma-L-glutamyl-L-cysteine + ADP + phosphate + H(+). It functions in the pathway sulfur metabolism; glutathione biosynthesis; glutathione from L-cysteine and L-glutamate: step 1/2. This chain is Glutamate--cysteine ligase, found in Salmonella typhi.